We begin with the raw amino-acid sequence, 570 residues long: MLTTPPRTFVSVPFFFFFLLFLSLPLSSFSQSNSVYNSFLKCFSDKTKSPQSQITDNVFSQTNPAFSSVLRAYIRNARFNTSSTLKPTIIITPRSESHVSAAVTCSKTLNFLLKIRSGGHDYDGLSYISDKPFFILDMSNIRDVSVDIASNSAWISAGATLGEVYYRIWEKSRVHGFPAGVCPTVGVGGHLSGGGYGNMVRKFGLSVDYVEDAKIVDVNGRVLDRKAMGEDLFWAITGGGGGSYGVVLGYKVKLVPVPSVVTVFRVEQYMDSGAVDMVHKWQSVGPKTDPNLFMRMLIQPVTRKKVKTVRASVVALFLGRADEVVALLSKEFPELGLKKENCSEMTWFQSALWWDNRLNATQVDPKVFLDRNLDTSSFGKRKSDYVATAIPKKGIESLFKKMIELGKIGLVFNPYGGKMAEVAVNAKPFPHRNKLFKIQYSVNWKENSAEIEKGYLNQAKVLYSFMTGFVSKNPRSSYFNYRDVDIGVNDHGANSYKEGEVYGRKYFGENFDRLVKIKTAVDPGNFFRNEQSIPTLKNEKGMLLPEPGKARRWSRVGGATVVATVVLHVF.

The N-terminal stretch at 1–30 (MLTTPPRTFVSVPFFFFFLLFLSLPLSSFS) is a signal peptide. Residues C42 and C105 are joined by a disulfide bond. A glycan (N-linked (GlcNAc...) asparagine) is linked at N80. An FAD-binding PCMH-type domain is found at 83–257 (STLKPTIIIT…LGYKVKLVPV (175 aa)). Residues 120-182 (HDYDGLSYIS…RVHGFPAGVC (63 aa)) constitute a cross-link (6-(S-cysteinyl)-8alpha-(pros-histidyl)-FAD (His-Cys)). N341 and N359 each carry an N-linked (GlcNAc...) asparagine glycan.

Belongs to the oxygen-dependent FAD-linked oxidoreductase family. The cofactor is FAD. In terms of processing, the FAD cofactor is bound via a bicovalent 6-S-cysteinyl, 8alpha-N1-histidyl FAD linkage.

The protein resides in the secreted. It localises to the cell wall. This Arabidopsis thaliana (Mouse-ear cress) protein is Berberine bridge enzyme-like 19.